Here is a 381-residue protein sequence, read N- to C-terminus: MAPHPTLKATFAARSETATHPLTAYLFKLMDLKASNLCLSADVPTARELLYLADKIGPSIVVLKTHYDMVSGWTSHPETGTGAQLASLARKHGFLIFEDRKFGDIGHTVELQYTGGSARIIDWAHIVNVNMVPGKASVASLAQGAKRWLERYPCEVKTSVTVGTPTMDSFDDDADSRDAEPAGAVNGMGSIGVLDKPIYSNRSGDGRKGSIVSITTVTQQYESVSSPRLTKAIAEGDESLFPGIEEAPLSRGLLILAQMSSQGNFMNKEYTQASVEAAREHKDFVMGFISQETLNTEPDDAFIHMTPGCQLPPEDEDQQTNGSVGGDGQGQQYNTPHKLIGIAGSDIAIVGRGILKASDPVEEAERYRSAAWKAYTERLLR.

Substrate is bound by residues Asp42, 64-66 (KTH), 99-108 (DRKFGDIGHT), Tyr333, and Arg352. Lys101 functions as the Proton donor in the catalytic mechanism. The segment at 311-333 (LPPEDEDQQTNGSVGGDGQGQQY) is disordered.

It belongs to the OMP decarboxylase family.

The catalysed reaction is orotidine 5'-phosphate + H(+) = UMP + CO2. Its pathway is pyrimidine metabolism; UMP biosynthesis via de novo pathway; UMP from orotate: step 2/2. This chain is Orotidine 5'-phosphate decarboxylase (ura3), found in Hypocrea jecorina (Trichoderma reesei).